Here is a 440-residue protein sequence, read N- to C-terminus: 23S rRNA (uracil(1939)-C(5))-methyltransferase RlmD (440 aa).

The interval 1 to 21 (MRRRTSPRRTTTSKPQPIGPI) is disordered. The TRAM domain occupies 15 to 73 (PQPIGPIQTFEVDGLTHEAKGVARLQGKVTFIEGALPGETVEAQVNKAGRRFDEAVLVN). [4Fe-4S] cluster contacts are provided by Cys-86, Cys-92, Cys-95, and Cys-169. S-adenosyl-L-methionine-binding residues include Gln-273, Phe-302, Asn-307, Glu-323, Asp-350, and Asp-370. The Nucleophile role is filled by Cys-396.

This sequence belongs to the class I-like SAM-binding methyltransferase superfamily. RNA M5U methyltransferase family. RlmD subfamily.

It carries out the reaction uridine(1939) in 23S rRNA + S-adenosyl-L-methionine = 5-methyluridine(1939) in 23S rRNA + S-adenosyl-L-homocysteine + H(+). Catalyzes the formation of 5-methyl-uridine at position 1939 (m5U1939) in 23S rRNA. In Marinomonas sp. (strain MWYL1), this protein is 23S rRNA (uracil(1939)-C(5))-methyltransferase RlmD.